Consider the following 122-residue polypeptide: Vacuolar transporter chaperone complex subunit 1 (122 aa).

Topologically, residues 1 to 32 are cytoplasmic; it reads MSTQPLLQTTPGKRIALPVRVEPKVFFANERT. The helical transmembrane segment at 33-53 threads the bilayer; that stretch reads FLSWLSFAVVLGGLSVGLLNF. The Vacuolar portion of the chain corresponds to 54 to 59; the sequence is GDRIGK. Residues 60–80 form a helical membrane-spanning segment; the sequence is ISAGLFTIVAIGTMGYALGIY. At 81–101 the chain is on the cytoplasmic side; it reads HWRASAIRRRGSGPYDDRLGP. A helical membrane pass occupies residues 102–122; sequence TILCFVLLAAIITNFVLRMLF.

This sequence belongs to the VTC1 family. As to quaternary structure, the VTC core complex is an integral membrane heterooligomer composed of at least the catalytic subunit vtc4 and the accessory subunits vtc1 and vtc2. vtc1 is a small membrane protein without hydrophilic domain. Vtc2 and vtc4 are related and have 2 hydrophilic domains that face the cytosol, an N-terminal SPX domain and the central core domain. The central core in vtc4 is the catalytic domain. Vtc1 interacts with GTP-bound Ras-like cdc42, which is subsequently inactivated.

It is found in the vacuole membrane. In terms of biological role, accessory subunit of the vacuolar transporter chaperone (VTC) complex. The VTC complex acts as a vacuolar polyphosphate polymerase that catalyzes the synthesis of inorganic polyphosphate (polyP) via transfer of phosphate from ATP to a growing polyP chain, releasing ADP. VTC exposes its catalytic domain vtc4 to the cytosol, where the growing polyP chain winds through a tunnel-shaped pocket, integrating cytoplasmic polymer synthesis with polyP membrane translocation. The VTC complex carries 9 vacuolar transmembrane domains, which are likely to constitute the translocation channel into the organelle lumen. PolyP synthesis is tightly coupled to its transport into the vacuole lumen, in order to avoid otherwise toxic intermediates in the cytosol, and it depends on the proton gradient across the membrane, formed by V-ATPase. Vtc1 contributes only 3 transmembrane domains to the complex. The VTC complex also plays a role in vacuolar membrane fusion. Involved in the control of cell polarity. This Schizosaccharomyces pombe (strain 972 / ATCC 24843) (Fission yeast) protein is Vacuolar transporter chaperone complex subunit 1.